The following is a 274-amino-acid chain: Large ribosomal subunit protein uL2 (274 aa).

The tract at residues 221–254 (RGTAMNPADHPHGGGEGRTFGKHPVSPWGLPTKG) is disordered.

The protein belongs to the universal ribosomal protein uL2 family. In terms of assembly, part of the 50S ribosomal subunit. Forms a bridge to the 30S subunit in the 70S ribosome.

Its function is as follows. One of the primary rRNA binding proteins. Required for association of the 30S and 50S subunits to form the 70S ribosome, for tRNA binding and peptide bond formation. It has been suggested to have peptidyltransferase activity; this is somewhat controversial. Makes several contacts with the 16S rRNA in the 70S ribosome. The sequence is that of Large ribosomal subunit protein uL2 from Sulfurihydrogenibium sp. (strain YO3AOP1).